Here is a 150-residue protein sequence, read N- to C-terminus: Globin-3 (150 aa).

The 140-residue stretch at P11–Y150 folds into the Globin domain. Heme b contacts are provided by H74 and H106.

The protein belongs to the globin family. Monomer.

This chain is Globin-3, found in Mordacia mordax (Southern hemisphere lamprey).